Consider the following 204-residue polypeptide: Probable nicotinate-nucleotide adenylyltransferase (204 aa).

It belongs to the NadD family.

It carries out the reaction nicotinate beta-D-ribonucleotide + ATP + H(+) = deamido-NAD(+) + diphosphate. The protein operates within cofactor biosynthesis; NAD(+) biosynthesis; deamido-NAD(+) from nicotinate D-ribonucleotide: step 1/1. Its function is as follows. Catalyzes the reversible adenylation of nicotinate mononucleotide (NaMN) to nicotinic acid adenine dinucleotide (NaAD). This is Probable nicotinate-nucleotide adenylyltransferase from Clostridium beijerinckii (strain ATCC 51743 / NCIMB 8052) (Clostridium acetobutylicum).